The following is a 217-amino-acid chain: Twisted gastrulation protein homolog 1-A (217 aa).

The N-terminal stretch at methionine 1 to glycine 26 is a signal peptide. N-linked (GlcNAc...) asparagine glycosylation is found at asparagine 53 and asparagine 147.

The protein belongs to the twisted gastrulation protein family.

It localises to the secreted. Involved in dorsal-ventral patterning. Appears to function predominantly as a ventralizing factor, through its actions as a BMP signaling agonist, acting through both chd-dependent and chd-independent mechanisms. May also antagonize BMP signaling, probably via formation of ternary complexes with chd and BMPs, resulting in dorsalization. The polypeptide is Twisted gastrulation protein homolog 1-A (twsg1a) (Danio rerio (Zebrafish)).